Reading from the N-terminus, the 169-residue chain is Photosystem I assembly protein Ycf3 (169 aa).

TPR repeat units follow at residues 35–68 (AFTY…EIDP), 72–105 (SYIL…NPSL), and 120–153 (GEQA…APNN).

Belongs to the Ycf3 family.

The protein resides in the plastid. It is found in the chloroplast thylakoid membrane. In terms of biological role, essential for the assembly of the photosystem I (PSI) complex. May act as a chaperone-like factor to guide the assembly of the PSI subunits. The sequence is that of Photosystem I assembly protein Ycf3 from Staurastrum punctulatum (Green alga).